Reading from the N-terminus, the 878-residue chain is Protein argonaute 6 (878 aa).

Residues 1–17 (METSSSLPLSPISIEPE) show a composition bias toward low complexity. Residues 1–25 (METSSSLPLSPISIEPEQPSHRDYD) form a disordered region. The region spanning 259 to 372 (PVIEFLKANQ…LPLEFCNLVS (114 aa)) is the PAZ domain. The 311-residue stretch at 541–851 (FILCILPERK…AAAQVAQFTK (311 aa)) folds into the Piwi domain.

This sequence belongs to the argonaute family. Ago subfamily. In terms of tissue distribution, expressed in roots, cotyledons and shoot meristematic region.

The protein localises to the nucleus. Involved in transcriptional gene silencing (TGS). Component of the RISC complex that associate with the small interfering RNA (siRNA) pathway involved in direct cytosine methylation at endogenous DNA repeats. Required for the accumulation of specific siRNAs derived from transgene and heterochromatin-related endogenous loci. Involved in RNA-directed DNA methylation (RdDM) at specific endogenous loci. Probably not required for the accumulation of siRNAs derived from transgene inverted repeats that induce post-transcriptional gene silencing (PTGS). Associates mainly with small RNAs of 24 nucleotide in length and preferentially recruits small RNAs with a 5' terminal adenosine. Targeted by turnip yellows virus (TuYV) protein P0 (via F-box-like domain) for probable proteasome degradation and thereby inactivating AGO6 function in RNA silencing. The sequence is that of Protein argonaute 6 (AGO6) from Arabidopsis thaliana (Mouse-ear cress).